The following is a 152-amino-acid chain: Dynein light chain Tctex-type protein 2B (152 aa).

Belongs to the dynein light chain Tctex-type family. As to quaternary structure, light chain of the cytoplasmic dynein complex 2, a multisubunit complex composed at least of eleven different proteins. The cytoplasmic dynein 2 complex consists of two catalytic heavy chains (HCs) and a number of non-catalytic subunits presented by intermediate chains (ICs), light intermediate chains (LICs) and light chains (LCs). Among them, a heavy chain (DYNC2H1), two intermediate chains (DYNC2I2 and DYNC2I1), a light intermediate chain (DYNC2LI1), and a light chain (DYNLT2B) are unique to the dynein-2 complex, but a subset of the light chains are also shared by dynein-1 and dynein-2 complexes. The dimer DYNLT2B-DYNLT1/DYNLT3 interacts with DYNC2I1; this interaction is crucial for retrograde trafficking of ciliary proteins.

It is found in the dynein axonemal particle. Its function is as follows. Acts as one of several non-catalytic accessory components of the cytoplasmic dynein 2 complex (dynein-2 complex), a motor protein complex that drives the movement of cargos along microtubules within cilia and flagella in concert with the intraflagellar transport (IFT) system. Required for proper retrograde ciliary transport. The protein is Dynein light chain Tctex-type protein 2B (DYNLT2B) of Bos taurus (Bovine).